The primary structure comprises 292 residues: Protease HtpX homolog (292 aa).

The next 2 membrane-spanning stretches (helical) occupy residues 9–29 (TGVL…VLGN) and 31–51 (TGMM…YWYS). Position 133 (His-133) interacts with Zn(2+). Glu-134 is an active-site residue. Zn(2+) is bound at residue His-137. Helical transmembrane passes span 148-168 (LAAV…WMLW) and 185-205 (LGAI…QMAI). Glu-210 is a Zn(2+) binding site.

Belongs to the peptidase M48B family. Zn(2+) is required as a cofactor.

It is found in the cell membrane. The sequence is that of Protease HtpX homolog from Thermococcus sibiricus (strain DSM 12597 / MM 739).